The chain runs to 2095 residues: Oxygen-regulated protein 1 (2095 aa).

2 Doublecortin domains span residues 35–117 and 157–236; these read KRIS…VDLD and RRLV…GNYD. 5 disordered regions span residues 358 to 379, 643 to 688, 863 to 887, 1400 to 1430, and 1572 to 1595; these read GLSN…DYGP, ENRK…GKIP, GAEV…PDFP, NKKK…SSER, and SGYP…EPTR. The span at 1405 to 1419 shows a compositional bias: basic and acidic residues; the sequence is ISSDKEESRTSEEPR. Over residues 1420–1430 the composition is skewed to polar residues; that stretch reads SITNSMTSSER. Residues 1583-1595 show a composition bias toward basic and acidic residues; it reads HNDDSGQEKEPTR.

In terms of assembly, interacts (via the doublecortin domains) with microtubules. Interacts with RP1L1. Interacts with MAK. Expressed in the cell bodies and inner segments of photoreceptors. Not found in liver, spleen, kidney, brain, thymus, muscle, heart, lung and testis.

The protein localises to the cytoplasm. Its subcellular location is the cytoskeleton. The protein resides in the cilium axoneme. It is found in the cell projection. It localises to the cilium. The protein localises to the photoreceptor outer segment. Its function is as follows. Microtubule-associated protein regulating the stability and length of the microtubule-based axoneme of photoreceptors. Required for the differentiation of photoreceptor cells, it plays a role in the organization of the outer segment of rod and cone photoreceptors ensuring the correct orientation and higher-order stacking of outer segment disks along the photoreceptor axoneme. This Mus musculus (Mouse) protein is Oxygen-regulated protein 1 (Rp1).